Reading from the N-terminus, the 457-residue chain is Argininosuccinate lyase (457 aa).

The protein belongs to the lyase 1 family. Argininosuccinate lyase subfamily.

It is found in the cytoplasm. It carries out the reaction 2-(N(omega)-L-arginino)succinate = fumarate + L-arginine. It functions in the pathway amino-acid biosynthesis; L-arginine biosynthesis; L-arginine from L-ornithine and carbamoyl phosphate: step 3/3. This Escherichia coli O1:K1 / APEC protein is Argininosuccinate lyase.